We begin with the raw amino-acid sequence, 59 residues long: Large ribosomal subunit protein uL30 (59 aa).

This sequence belongs to the universal ribosomal protein uL30 family. As to quaternary structure, part of the 50S ribosomal subunit.

The polypeptide is Large ribosomal subunit protein uL30 (Lactococcus lactis subsp. lactis (strain IL1403) (Streptococcus lactis)).